A 1036-amino-acid chain; its full sequence is Ephrin type-A receptor 6 (1036 aa).

A signal peptide spans 1–22; it reads MGGCEVREFLLQFGFFLPLLTA. The Extracellular portion of the chain corresponds to 23-550; sequence WPGDCSHVSN…MAAEQGQILV (528 aa). Residues 34–212 enclose the Eph LBD domain; it reads QVVLLDTTTV…FYKKCPFTVR (179 aa). Fibronectin type-III domains lie at 331–441 and 442–537; these read PPSA…TDQD and APSL…TGDE. Asparagine 343, asparagine 397, and asparagine 410 each carry an N-linked (GlcNAc...) asparagine glycan. The helical transmembrane segment at 551–571 threads the bilayer; that stretch reads IATAAVGGFTLLVILTLFFLI. The Cytoplasmic portion of the chain corresponds to 572–1036; that stretch reads TGRCQWYIKA…MHIQEKGFHV (465 aa). Residues tyrosine 606 and tyrosine 612 each carry the phosphotyrosine; by autocatalysis modification. In terms of domain architecture, Protein kinase spans 631 to 944; the sequence is IRIERVIGAG…RNPSALHTLV (314 aa). Residues 637-645 and lysine 663 contribute to the ATP site; that span reads IGAGEFGEV. Aspartate 798 (proton acceptor) is an active-site residue. A phosphotyrosine; by autocatalysis mark is found at tyrosine 831 and tyrosine 978. The SAM domain occupies 961-1025; sequence PLFVTVGDWL…VSSIQTLRLH (65 aa). The PDZ-binding motif lies at 1034–1036; it reads FHV.

The protein belongs to the protein kinase superfamily. Tyr protein kinase family. Ephrin receptor subfamily. Heterotetramer upon binding of the ligand. The heterotetramer is composed of an ephrin dimer and a receptor dimer. Oligomerization is probably required to induce biological responses. Interacts (via SAM domain) with ANKS1A (via SAM domain). As to expression, expressed in brain and testis.

It localises to the membrane. It carries out the reaction L-tyrosyl-[protein] + ATP = O-phospho-L-tyrosyl-[protein] + ADP + H(+). Its function is as follows. Receptor tyrosine kinase which binds promiscuously GPI-anchored ephrin-A family ligands residing on adjacent cells, leading to contact-dependent bidirectional signaling into neighboring cells. The signaling pathway downstream of the receptor is referred to as forward signaling while the signaling pathway downstream of the ephrin ligand is referred to as reverse signaling. The polypeptide is Ephrin type-A receptor 6 (EPHA6) (Homo sapiens (Human)).